The chain runs to 441 residues: Cysteine--tRNA ligase (441 aa).

Residue Cys24 participates in Zn(2+) binding. A 'HIGH' region motif is present at residues 26-36 (PTVYNYIHIGN). Cys204, His230, and Glu234 together coordinate Zn(2+). Residues 262–266 (KMSKS) carry the 'KMSKS' region motif. Position 265 (Lys265) interacts with ATP.

This sequence belongs to the class-I aminoacyl-tRNA synthetase family. Monomer. Requires Zn(2+) as cofactor.

The protein localises to the cytoplasm. The enzyme catalyses tRNA(Cys) + L-cysteine + ATP = L-cysteinyl-tRNA(Cys) + AMP + diphosphate. This chain is Cysteine--tRNA ligase, found in Mycoplasma mycoides subsp. mycoides SC (strain CCUG 32753 / NCTC 10114 / PG1).